A 980-amino-acid chain; its full sequence is Vacuolar protein sorting-associated protein 11 homolog (980 aa).

The stretch at 407–554 (YKETIGMLEP…GRDLLIHARD (148 aa)) is one CHCR repeat. The segment at 803 to 843 (CSACDTPLQLPTVHFLCKHAYHVHCFESYNMDGSDKCPACQ) adopts an RING-type; atypical zinc-finger fold. Residues 886–898 (TKKTKKSEAKKDP) show a composition bias toward basic and acidic residues. Residues 886-980 (TKKTKKSEAK…APAPSTNPFD (95 aa)) form a disordered region. 2 stretches are compositionally biased toward polar residues: residues 917–937 (TTISRTMSTVSSNMATPSRQR) and 947–960 (TNPFFNSDSGTRLS).

Belongs to the VPS11 family. Probable core component of at least two putative endosomal tethering complexes, the homotypic fusion and vacuole protein sorting (HOPS) complex and the class C core vacuole/endosome tethering (CORVET) complex. Their common core is composed of the class C Vps proteins vps-11, vps-16 and vps-18, which in HOPS further associates with vps-33.1, vps-39 and vps-41 and in CORVET with vps-8 and vps-33.2.

It is found in the late endosome membrane. The protein resides in the lysosome membrane. Its function is as follows. Plays a role in vesicle-mediated protein trafficking to lysosomal compartments including the endocytic membrane transport pathways. Believed to act as a core component of the putative HOPS and CORVET endosomal tethering complexes which are proposed to be involved in the rab-5-to-rab-7 endosome conversion probably implicating sand-1, and via binding SNAREs and SNARE complexes to mediate tethering and docking events during SNARE-mediated membrane fusion. The HOPS complex is proposed to be recruited to Rab7 on the late endosomal membrane and to regulate late endocytic, phagocytic and autophagic traffic towards lysosomes. Within the HOPS complex, contributes to the normal development of gut granules in embryonic and adult intestinal cells. The CORVET complex is proposed to function as a Rab5 effector to mediate early endosome fusion probably in specific endosome subpopulations. Required for fusion of endosomes and autophagosomes with lysosomes. Involved in cargo transport from early to late endosomes and required for the transition from early to late endosomes. Possibly has a role in clearance of apoptotic cells during programmed cell death. The sequence is that of Vacuolar protein sorting-associated protein 11 homolog from Caenorhabditis elegans.